A 357-amino-acid polypeptide reads, in one-letter code: Guanine nucleotide-binding protein alpha-1 subunit (357 aa).

Residue Gly2 is the site of N-myristoyl glycine attachment. Cys4 carries S-palmitoyl cysteine lipidation. Positions 32-357 constitute a G-alpha domain; the sequence is NVIKLLLLGA…SSKLKGCGLF (326 aa). Positions 35-48 are G1 motif; sequence KLLLLGAGESGKST. Glu43, Ser44, Gly45, Lys46, Ser47, Thr48, Asp151, Leu176, Thr182, Gly204, Asn270, Lys271, Asp273, and Ala329 together coordinate GTP. Ser47 contributes to the Mg(2+) binding site. The tract at residues 174 to 182 is G2 motif; that stretch reads DILHTRVPT. Residue Thr182 coordinates Mg(2+). A G3 motif region spans residues 197 to 206; that stretch reads FRVFDVGGQR. Residues 266 to 273 are G4 motif; the sequence is ILFLNKVD. A G5 motif region spans residues 327–332; that stretch reads TCATDT.

Belongs to the G-alpha family. G(q) subfamily. In terms of assembly, g proteins are composed of 3 units; alpha, beta and gamma. The alpha chain contains the guanine nucleotide binding site. It depends on Mg(2+) as a cofactor.

In terms of biological role, guanine nucleotide-binding proteins (G proteins) are involved as modulators or transducers in various transmembrane signaling systems. The polypeptide is Guanine nucleotide-binding protein alpha-1 subunit (gpa-1) (Caenorhabditis briggsae).